We begin with the raw amino-acid sequence, 495 residues long: D-hydantoinase/dihydropyrimidinase (495 aa).

Positions 59, 61, and 150 each coordinate Zn(2+). K150 bears the N6-carboxylysine mark. Y155 contributes to the substrate binding site. 2 residues coordinate Zn(2+): H183 and H239. S289 serves as a coordination point for substrate. D316 is a binding site for Zn(2+). N337 contributes to the substrate binding site.

It belongs to the metallo-dependent hydrolases superfamily. Hydantoinase/dihydropyrimidinase family. As to quaternary structure, homotetramer. Zn(2+) is required as a cofactor. Carboxylation allows a single lysine to coordinate two zinc ions.

The enzyme catalyses 5,6-dihydrouracil + H2O = 3-(carbamoylamino)propanoate + H(+). Its function is as follows. Catalyzes the hydrolysis of dihydropyrimidines and of the structurally related DL-5-mono-substituted hydantoins, to produce N-carbamoyl-D-amino acids. In Pseudomonas putida (Arthrobacter siderocapsulatus), this protein is D-hydantoinase/dihydropyrimidinase.